Consider the following 115-residue polypeptide: Nitrogenase-stabilizing/protective protein NifW (115 aa).

It belongs to the NifW family. In terms of assembly, homotrimer; associates with NifD.

Its function is as follows. May protect the nitrogenase Fe-Mo protein from oxidative damage. The sequence is that of Nitrogenase-stabilizing/protective protein NifW from Stutzerimonas stutzeri (strain A1501) (Pseudomonas stutzeri).